The chain runs to 443 residues: Protein IQ-DOMAIN 11 (443 aa).

A calmodulin-binding region spans residues 5–20 (KGLFTVLKRIFISEVN). 2 short sequence motifs (nuclear localization signal) span residues 11–18 (LKRIFISE) and 27–34 (RRKWTFWK). Positions 44-65 (ITAPPEHRTSHESHEEQKEEIV) are disordered. The span at 48–64 (PEHRTSHESHEEQKEEI) shows a compositional bias: basic and acidic residues. IQ domains follow at residues 113 to 138 (AATR…GIVK) and 139 to 161 (LQAY…CLQS). Residues 277–293 (FSSKTKPKDETLNEKQL) are compositionally biased toward basic and acidic residues. A disordered region spans residues 277 to 361 (FSSKTKPKDE…PRSFDTQSES (85 aa)).

This sequence belongs to the IQD family. Binds to multiple calmodulin (CaM) in the presence of Ca(2+) and CaM-like proteins. In terms of tissue distribution, expressed in hypocotyls, cotyledons, leaves and petioles.

Its subcellular location is the nucleus. It is found in the cytoplasm. It localises to the cytoskeleton. In terms of biological role, may be involved in cooperative interactions with calmodulins or calmodulin-like proteins. Recruits calmodulin proteins to microtubules, thus being a potential scaffold in cellular signaling and trafficking. Regulates cell shape and elongation in aerial organs (i.e. epidermis pavement cells) probably by regulating cortical microtubules (MT) arrays orientation. May associate with nucleic acids and regulate gene expression at the transcriptional or post-transcriptional level. The polypeptide is Protein IQ-DOMAIN 11 (Arabidopsis thaliana (Mouse-ear cress)).